Reading from the N-terminus, the 334-residue chain is HTH-type transcriptional repressor PurR (334 aa).

The 55-residue stretch at 2–56 (ATIKDVAKMAGVSTTTVSHVINKTRHVADETKQTVLDAIKALNYSPSAVARSLKV) folds into the HTH lacI-type domain. The segment at residues 4 to 23 (IKDVAKMAGVSTTTVSHVIN) is a DNA-binding region (H-T-H motif). A DNA-binding region spans residues 48–56 (SAVARSLKV). Hypoxanthine-binding residues include Y73, K189, T191, F220, and D274.

Homodimer.

It functions in the pathway purine metabolism; purine nucleotide biosynthesis [regulation]. In terms of biological role, is the main repressor of the genes involved in the de novo synthesis of purine nucleotides, regulating purB, purC, purEK, purF, purHD, purL, purMN and guaBA expression. PurR is allosterically activated to bind its cognate DNA by binding the purine corepressors, hypoxanthine or guanine, thereby effecting transcription repression. In Mannheimia succiniciproducens (strain KCTC 0769BP / MBEL55E), this protein is HTH-type transcriptional repressor PurR.